The primary structure comprises 85 residues: MAHKKGGGSTKNGRDSNPKYLGVKAAGGSTVAAGTIILRQRGTVIKPGVNAGIGRDHTIFALVDGIVSFRNGRNNKKQVSVEPCC.

Residues 1–21 (MAHKKGGGSTKNGRDSNPKYL) are disordered.

The protein belongs to the bacterial ribosomal protein bL27 family.

The chain is Large ribosomal subunit protein bL27 from Chlorobium chlorochromatii (strain CaD3).